The following is a 185-amino-acid chain: MIDETLFDAEEKMEKAVSVARDDLASIRTGRANPGMFNRIHIDYYGASTPITQLSSINVPEARMVVIKPYEANQLRPIEDAIRNSDLGVNPTNDGNIIRVSIPQLTEERRRDLVKQAKSKGEDAKVSIRNIRRKAMEELARIKKDGDAGEDDVTRAEKDLDKSTHQYTSQVDDLVKHKEGELLEV.

Residues 142–164 (IKKDGDAGEDDVTRAEKDLDKST) show a composition bias toward basic and acidic residues. Positions 142-173 (IKKDGDAGEDDVTRAEKDLDKSTHQYTSQVDD) are disordered.

Belongs to the RRF family.

The protein localises to the cytoplasm. Functionally, responsible for the release of ribosomes from messenger RNA at the termination of protein biosynthesis. May increase the efficiency of translation by recycling ribosomes from one round of translation to another. The polypeptide is Ribosome-recycling factor (Mycolicibacterium gilvum (strain PYR-GCK) (Mycobacterium gilvum (strain PYR-GCK))).